Reading from the N-terminus, the 369-residue chain is MPEQKPYRIIISGGGTGGHIYPAVAIANAIKARFPDSEILFVGAQGRMEMQKVPAAGYNIEGLWISGIQRKLSLDNLAFPLKVIASYFKAKKIVSTFKPDIAIGVGGYASWPLLQAANASGVATLIQEQNSYAGVANKALSKKVKAICVAYERMERFFPGDKIVYTGNPVRKDIVDYKKYSEGAHTFFGLKPGVPTLFVMGGSLGARTINLSIERNLEQLKNAGIQVLWQTGKFYYEGLKQYNSETIKVTDFIADMNRAYAMADVIVSRAGALSISELSIVGKPCILVPSPNVAEDHQTKNALALSEKQAAWMVKDMNAPEELVQKALELMKNQDAQHTLSKNILTFARPDATERIVNKVFEIINTDRK.

UDP-N-acetyl-alpha-D-glucosamine contacts are provided by residues 16-18 (TGG), asparagine 130, arginine 171, serine 203, isoleucine 253, and glutamine 298.

This sequence belongs to the glycosyltransferase 28 family. MurG subfamily.

The protein resides in the cell inner membrane. The enzyme catalyses di-trans,octa-cis-undecaprenyl diphospho-N-acetyl-alpha-D-muramoyl-L-alanyl-D-glutamyl-meso-2,6-diaminopimeloyl-D-alanyl-D-alanine + UDP-N-acetyl-alpha-D-glucosamine = di-trans,octa-cis-undecaprenyl diphospho-[N-acetyl-alpha-D-glucosaminyl-(1-&gt;4)]-N-acetyl-alpha-D-muramoyl-L-alanyl-D-glutamyl-meso-2,6-diaminopimeloyl-D-alanyl-D-alanine + UDP + H(+). Its pathway is cell wall biogenesis; peptidoglycan biosynthesis. In terms of biological role, cell wall formation. Catalyzes the transfer of a GlcNAc subunit on undecaprenyl-pyrophosphoryl-MurNAc-pentapeptide (lipid intermediate I) to form undecaprenyl-pyrophosphoryl-MurNAc-(pentapeptide)GlcNAc (lipid intermediate II). This Cytophaga hutchinsonii (strain ATCC 33406 / DSM 1761 / CIP 103989 / NBRC 15051 / NCIMB 9469 / D465) protein is UDP-N-acetylglucosamine--N-acetylmuramyl-(pentapeptide) pyrophosphoryl-undecaprenol N-acetylglucosamine transferase.